We begin with the raw amino-acid sequence, 227 residues long: (S)-2-haloacid dehalogenase 1 (227 aa).

The active-site Nucleophile is the Asp10. An (S)-2-haloacid-binding positions include Ala11 to Tyr12, Arg41, and Ser118 to Asn119. Residues Ser175–Asp180 are important for catalytic activity.

This sequence belongs to the HAD-like hydrolase superfamily. S-2-haloalkanoic acid dehalogenase family.

It catalyses the reaction an (S)-2-haloacid + H2O = a (2R)-2-hydroxycarboxylate + a halide anion + H(+). It carries out the reaction (S)-2-chloropropanoate + H2O = (R)-lactate + chloride + H(+). In terms of biological role, catalyzes the hydrolytic dehalogenation of small (S)-2-haloalkanoic acids to yield the corresponding (R)-2-hydroxyalkanoic acids. Acts on acids of short chain lengths, C(2) to C(4), with inversion of configuration at C-2. Active with 2-halogenated carboxylic acids and converts only the S-isomer (or L-isomer) of 2-chloropropionic acid with inversion of configuration to produce R-lactate (or D-isomer). This chain is (S)-2-haloacid dehalogenase 1, found in Pseudomonas sp. (strain CBS-3).